We begin with the raw amino-acid sequence, 233 residues long: Large ribosomal subunit protein uL1 (233 aa).

Belongs to the universal ribosomal protein uL1 family. As to quaternary structure, part of the 50S ribosomal subunit.

Its function is as follows. Binds directly to 23S rRNA. The L1 stalk is quite mobile in the ribosome, and is involved in E site tRNA release. Protein L1 is also a translational repressor protein, it controls the translation of the L11 operon by binding to its mRNA. The protein is Large ribosomal subunit protein uL1 of Novosphingobium aromaticivorans (strain ATCC 700278 / DSM 12444 / CCUG 56034 / CIP 105152 / NBRC 16084 / F199).